The following is a 185-amino-acid chain: Virulence membrane protein PagC (185 aa).

Residues 1-23 (MKNIILSTLVITTSVLVVNVAQA) form the signal peptide.

This sequence belongs to the outer membrane OOP (TC 1.B.6) superfamily. Ail family.

It is found in the cell outer membrane. Essential for full virulence and survival within macrophages. In Salmonella typhimurium (strain LT2 / SGSC1412 / ATCC 700720), this protein is Virulence membrane protein PagC (pagC).